The following is a 161-amino-acid chain: Phosphopantetheine adenylyltransferase (161 aa).

Ser8 is a substrate binding site. ATP contacts are provided by residues 8–9 (SF) and His16. Substrate contacts are provided by Lys40, Thr72, and Arg86. ATP is bound by residues 87–89 (GLR), Glu97, and 122–128 (HSFLSSS).

Belongs to the bacterial CoaD family. As to quaternary structure, homohexamer. It depends on Mg(2+) as a cofactor.

Its subcellular location is the cytoplasm. The catalysed reaction is (R)-4'-phosphopantetheine + ATP + H(+) = 3'-dephospho-CoA + diphosphate. Its pathway is cofactor biosynthesis; coenzyme A biosynthesis; CoA from (R)-pantothenate: step 4/5. Reversibly transfers an adenylyl group from ATP to 4'-phosphopantetheine, yielding dephospho-CoA (dPCoA) and pyrophosphate. This chain is Phosphopantetheine adenylyltransferase, found in Prochlorococcus marinus (strain SARG / CCMP1375 / SS120).